We begin with the raw amino-acid sequence, 401 residues long: Multidrug resistance protein MdtH (401 aa).

11 consecutive transmembrane segments (helical) span residues Tyr-13–Ile-33, Ser-34–Leu-54, Ile-88–Leu-108, Ile-139–Leu-159, Phe-164–Trp-184, Phe-211–Met-231, Tyr-248–Met-268, Glu-275–Val-295, Leu-298–Ala-318, Leu-341–Gly-361, and Phe-366–Tyr-386.

The protein belongs to the major facilitator superfamily. DHA1 family. MdtH (TC 2.A.1.2.21) subfamily.

It is found in the cell inner membrane. This chain is Multidrug resistance protein MdtH, found in Blochmanniella floridana.